The sequence spans 303 residues: Tyrosine recombinase XerC (303 aa).

The region spanning 1–85 (MRADLDAFLE…ATRGLYQYLL (85 aa)) is the Core-binding (CB) domain. Positions 106–285 (KLPRTLDADR…DFQHLASVYD (180 aa)) constitute a Tyr recombinase domain. Residues Arg146, Lys170, His237, Arg240, and His263 contribute to the active site. The active-site O-(3'-phospho-DNA)-tyrosine intermediate is Tyr272.

Belongs to the 'phage' integrase family. XerC subfamily. Forms a cyclic heterotetrameric complex composed of two molecules of XerC and two molecules of XerD.

It localises to the cytoplasm. In terms of biological role, site-specific tyrosine recombinase, which acts by catalyzing the cutting and rejoining of the recombining DNA molecules. The XerC-XerD complex is essential to convert dimers of the bacterial chromosome into monomers to permit their segregation at cell division. It also contributes to the segregational stability of plasmids. In Pseudomonas aeruginosa (strain LESB58), this protein is Tyrosine recombinase XerC.